A 255-amino-acid chain; its full sequence is 5-oxoprolinase subunit A (255 aa).

It belongs to the LamB/PxpA family. In terms of assembly, forms a complex composed of PxpA, PxpB and PxpC.

It carries out the reaction 5-oxo-L-proline + ATP + 2 H2O = L-glutamate + ADP + phosphate + H(+). Functionally, catalyzes the cleavage of 5-oxoproline to form L-glutamate coupled to the hydrolysis of ATP to ADP and inorganic phosphate. The protein is 5-oxoprolinase subunit A of Rhodopseudomonas palustris (strain BisB18).